The following is a 976-amino-acid chain: Vacuolar membrane protease (976 aa).

Residues 1–15 (MKLKSVFRSVLKYRK) lie on the Cytoplasmic side of the membrane. Residues 16–36 (TNLSLLLLITYSIITLLYIFD) form a helical membrane-spanning segment. The Vacuolar segment spans residues 37 to 359 (HERYKLNLPK…KFFVISAKTL (323 aa)). Asparagine 96 and asparagine 121 each carry an N-linked (GlcNAc...) asparagine glycan. 2 residues coordinate Zn(2+): histidine 156 and aspartate 168. Asparagine 189 carries N-linked (GlcNAc...) asparagine glycosylation. Glutamate 200 functions as the Proton acceptor in the catalytic mechanism. Glutamate 201 lines the Zn(2+) pocket. N-linked (GlcNAc...) asparagine glycosylation is present at asparagine 217. Positions 226 and 300 each coordinate Zn(2+). Residues 360–380 (FYWNCIFLLVSPVVAIGLYLI) form a helical membrane-spanning segment. Topologically, residues 381 to 392 (SRDRMTWKSYSW) are cytoplasmic. The chain crosses the membrane as a helical span at residues 393–412 (LSWTRFPLSLAAGIIVQKLF). The Vacuolar portion of the chain corresponds to 413–428 (SNDIIRSNPLTFSRNY). The helical transmembrane segment at 429–449 (FWPISAFFTQVIFTSYVLINC) threads the bilayer. Topologically, residues 450-461 (SNFFFPCADMKS) are cytoplasmic. The chain crosses the membrane as a helical span at residues 462–482 (LSIIELFIILWTILLFTSKLL). The Vacuolar segment spans residues 483–496 (YSSDYRYTGLYPLS). A helical transmembrane segment spans residues 497 to 517 (IFFLLSTIAAILRLLALALGM). Residues 518-627 (RTRKRLGREC…NSLKLEYTDY (110 aa)) lie on the Cytoplasmic side of the membrane. A disordered region spans residues 528–610 (RDHHSNYSSH…PLLKGSNSME (83 aa)). Positions 549–558 (NLEQPQDQLT) are enriched in polar residues. The span at 559–570 (SSQDDQASIQDD) shows a compositional bias: low complexity. Residues 582 to 601 (NVDEDHGMDSSSQQHDERVP) are compositionally biased toward basic and acidic residues. Residues 628–648 (AWIIQFLLIVPIPSFILFNSV) form a helical membrane-spanning segment. The Vacuolar segment spans residues 649-668 (DVIMDALNHTVQEGSKATFD). An N-linked (GlcNAc...) asparagine glycan is attached at asparagine 656. Residues 669–689 (VLRFGMVGSILIALPILPFFY) traverse the membrane as a helical segment. Topologically, residues 690 to 692 (KVN) are cytoplasmic. A helical transmembrane segment spans residues 693–713 (YITISLTALLFLISASKTLLV). The Vacuolar portion of the chain corresponds to 714–976 (HPFTNSNPLK…LVIVKDAIIL (263 aa)). Residues asparagine 768, asparagine 796, asparagine 811, asparagine 866, and asparagine 937 are each glycosylated (N-linked (GlcNAc...) asparagine).

The protein belongs to the peptidase M28 family. Requires Zn(2+) as cofactor. In terms of processing, N-glycosylated.

The protein localises to the vacuole membrane. Functionally, may be involved in vacuolar sorting and osmoregulation. This chain is Vacuolar membrane protease, found in Saccharomyces cerevisiae (strain ATCC 204508 / S288c) (Baker's yeast).